We begin with the raw amino-acid sequence, 63 residues long: MSSTSDKVKGMANEAVGNVKQAVGKATDNTKLQAEGKAQELKGEGQQAKGEVKDAVKKGVDKV.

The disordered stretch occupies residues Lys-20–Val-63. Residues Gly-50–Val-63 are compositionally biased toward basic and acidic residues.

Belongs to the UPF0337 (CsbD) family.

In Pseudomonas syringae pv. tomato (strain ATCC BAA-871 / DC3000), this protein is UPF0337 protein PSPTO_1596.